The following is a 407-amino-acid chain: Multifunctional CCA protein (407 aa).

The ATP site is built by glycine 8 and arginine 11. CTP-binding residues include glycine 8 and arginine 11. Mg(2+) is bound by residues aspartate 21 and aspartate 23. Residues arginine 91, arginine 137, and arginine 140 each coordinate ATP. CTP-binding residues include arginine 91, arginine 137, and arginine 140. Residues 228-329 enclose the HD domain; the sequence is TGMHTLMVSQ…IKIFDKMDLW (102 aa).

It belongs to the tRNA nucleotidyltransferase/poly(A) polymerase family. Bacterial CCA-adding enzyme type 1 subfamily. Monomer. Can also form homodimers and oligomers. Mg(2+) is required as a cofactor. Requires Ni(2+) as cofactor.

The enzyme catalyses a tRNA precursor + 2 CTP + ATP = a tRNA with a 3' CCA end + 3 diphosphate. It carries out the reaction a tRNA with a 3' CCA end + 2 CTP + ATP = a tRNA with a 3' CCACCA end + 3 diphosphate. Catalyzes the addition and repair of the essential 3'-terminal CCA sequence in tRNAs without using a nucleic acid template. Adds these three nucleotides in the order of C, C, and A to the tRNA nucleotide-73, using CTP and ATP as substrates and producing inorganic pyrophosphate. tRNA 3'-terminal CCA addition is required both for tRNA processing and repair. Also involved in tRNA surveillance by mediating tandem CCA addition to generate a CCACCA at the 3' terminus of unstable tRNAs. While stable tRNAs receive only 3'-terminal CCA, unstable tRNAs are marked with CCACCA and rapidly degraded. The protein is Multifunctional CCA protein of Aliivibrio salmonicida (strain LFI1238) (Vibrio salmonicida (strain LFI1238)).